The following is a 577-amino-acid chain: Protein NUCLEOLAR COMPLEX ASSOCIATED 4 (577 aa).

Positions Pro-230–Gly-263 are disordered. 3 helical membrane passes run Ile-329–Gly-349, Leu-350–Ala-370, and Leu-404–Leu-424.

This sequence belongs to the CBF/MAK21 family. In terms of assembly, component of the ribosomal small subunit (SSU) processome composed of at least 40 protein subunits and snoRNA U3. In terms of tissue distribution, mostly expressed in flowers and stems and at lower levels in roots, hypocotyls, siliques, leaves and seeds.

It is found in the nucleus membrane. The protein resides in the nucleus. Its subcellular location is the nucleolus. Essential protein required during embryogenesis. Involved in nucleolar processing of ribosomal RNA (rRNA) 40S and 90S ribosomal subunits and ribosome assembly; early in ribosome biogenesis, especially required during the maturation of 5.8S rRNA. Has a role in the nuclear export of 40S pre-ribosomal subunit to the cytoplasm. The sequence is that of Protein NUCLEOLAR COMPLEX ASSOCIATED 4 from Arabidopsis thaliana (Mouse-ear cress).